A 104-amino-acid chain; its full sequence is Pyrimidine/purine nucleoside phosphorylase (104 aa).

The protein belongs to the nucleoside phosphorylase PpnP family.

It catalyses the reaction a purine D-ribonucleoside + phosphate = a purine nucleobase + alpha-D-ribose 1-phosphate. The enzyme catalyses adenosine + phosphate = alpha-D-ribose 1-phosphate + adenine. The catalysed reaction is cytidine + phosphate = cytosine + alpha-D-ribose 1-phosphate. It carries out the reaction guanosine + phosphate = alpha-D-ribose 1-phosphate + guanine. It catalyses the reaction inosine + phosphate = alpha-D-ribose 1-phosphate + hypoxanthine. The enzyme catalyses thymidine + phosphate = 2-deoxy-alpha-D-ribose 1-phosphate + thymine. The catalysed reaction is uridine + phosphate = alpha-D-ribose 1-phosphate + uracil. It carries out the reaction xanthosine + phosphate = alpha-D-ribose 1-phosphate + xanthine. In terms of biological role, catalyzes the phosphorolysis of diverse nucleosides, yielding D-ribose 1-phosphate and the respective free bases. Can use uridine, adenosine, guanosine, cytidine, thymidine, inosine and xanthosine as substrates. Also catalyzes the reverse reactions. The sequence is that of Pyrimidine/purine nucleoside phosphorylase from Syntrophotalea carbinolica (strain DSM 2380 / NBRC 103641 / GraBd1) (Pelobacter carbinolicus).